The following is a 1380-amino-acid chain: Receptor-type adenylate cyclase A (1380 aa).

At 1–34 the chain is on the cytoplasmic side; sequence MAMQIRPSLGGCLRHGGAGDHAARRLSRLRAAKV. The chain crosses the membrane as a helical span at residues 35–55; the sequence is FVPTAVVCVLLCCAPWVMAEI. Over 56-891 the chain is Extracellular; sequence TNDAEREPVY…SHALTPAQRN (836 aa). 4 N-linked (GlcNAc...) asparagine glycosylation sites follow: Asn-422, Asn-478, Asn-497, and Asn-567. A helical transmembrane segment spans residues 892-912; that stretch reads GLIAGCVVGAVVLIATCTLLL. Residues 913-1380 lie on the Cytoplasmic side of the membrane; the sequence is YCCMDNRNND…NPHYARHAFE (468 aa). Residues 933–1087 form the Guanylate cyclase domain; that stretch reads TLLFTDIESS…DTSNMAARTE (155 aa). Residues Asp-938 and Asp-981 each coordinate Mg(2+). Positions 1270 to 1298 are disordered; the sequence is LAREGDSAAGGVRPRLPGSPVTSLPAGGS.

This sequence belongs to the adenylyl cyclase class-3 family. Requires Mg(2+) as cofactor.

It localises to the membrane. The enzyme catalyses ATP = 3',5'-cyclic AMP + diphosphate. Its function is as follows. Could act as a receptor for an unknown ligand. In Leishmania donovani, this protein is Receptor-type adenylate cyclase A (RAC-A).